A 517-amino-acid chain; its full sequence is Optineurin (517 aa).

Coiled-coil stretches lie at residues 15 to 127 and 174 to 453; these read NLGS…DLVA and KAES…LGRH. Disordered stretches follow at residues 216-237 and 454-488; these read KLEHADSSAQTSLPSAAETNAS and SMSEMQRRHVPRGANPQGPTAPNNLPGGRGEWQQQ. Positions 222 to 237 are enriched in polar residues; that stretch reads SSAQTSLPSAAETNAS. Residues 487–517 form a CCHC NOA-type zinc finger; it reads QQNIPDHACPKCGEVLPDLDSLQIHIMDCII. Residues Cys495, Cys498, His511, and Cys515 each coordinate Zn(2+).

The protein localises to the cytoplasm. Its subcellular location is the perinuclear region. It localises to the golgi apparatus. It is found in the trans-Golgi network. The protein resides in the cytoplasmic vesicle. The protein localises to the recycling endosome. Its subcellular location is the autophagosome. Probably part of the TNF-alpha signaling pathway that can shift the equilibrium toward induction of cell death. May act by regulating membrane trafficking and cellular morphogenesis. The chain is Optineurin (optn) from Danio rerio (Zebrafish).